The sequence spans 300 residues: MKLRGCGTALVTPFKQDGSVDFAAQRALVEWQIESGIDFLVPCGTTGETPTLSHDEWLKVIAQTVEVNHGRVPIVAGATSNNTAEAVEKAKEVAAIKGVDAILTASPYYNKPTQEGQYLHFKAIAEAVDKPLVLYNVPGRTAANIETATLLRLAKIPNIIAVKEASGSLPQIMDVCAQKPEDFTVLSGDDALTLPILAVGGVGLVSVASNQIPKELSEMVRAALNNDWATARKLHNHFLALMNANFLESNPGPVKAVLAMMGRIEENYRLPMVPMRPENRAKLEKIAAEAGVLKNATVAQ.

Thr46 contributes to the pyruvate binding site. Residue Tyr135 is the Proton donor/acceptor of the active site. The Schiff-base intermediate with substrate role is filled by Lys163. Pyruvate is bound at residue Val205.

This sequence belongs to the DapA family. As to quaternary structure, homotetramer; dimer of dimers.

It is found in the cytoplasm. It carries out the reaction L-aspartate 4-semialdehyde + pyruvate = (2S,4S)-4-hydroxy-2,3,4,5-tetrahydrodipicolinate + H2O + H(+). It participates in amino-acid biosynthesis; L-lysine biosynthesis via DAP pathway; (S)-tetrahydrodipicolinate from L-aspartate: step 3/4. In terms of biological role, catalyzes the condensation of (S)-aspartate-beta-semialdehyde [(S)-ASA] and pyruvate to 4-hydroxy-tetrahydrodipicolinate (HTPA). The polypeptide is 4-hydroxy-tetrahydrodipicolinate synthase (Koribacter versatilis (strain Ellin345)).